The chain runs to 298 residues: Mitochondrial basic amino acids transporter (298 aa).

Helical transmembrane passes span 2 to 22, 61 to 81, 96 to 116, 153 to 172, 187 to 207, and 255 to 275; these read ALDF…GHPF, GLGS…GVQG, FLAG…MELA, GMVS…FLTY, LLVP…WLST, and LLRA…VLSY. 3 Solcar repeats span residues 2–86, 90–178, and 185–275; these read ALDF…TLRA, DSPL…LTRA, and DRLL…VLSY.

This sequence belongs to the mitochondrial carrier (TC 2.A.29) family.

The protein resides in the mitochondrion inner membrane. The enzyme catalyses L-lysine(out) + L-arginine(in) = L-lysine(in) + L-arginine(out). It carries out the reaction L-histidine(out) + L-arginine(in) = L-histidine(in) + L-arginine(out). It catalyses the reaction L-ornithine(in) + L-arginine(out) = L-ornithine(out) + L-arginine(in). The catalysed reaction is L-homoarginine(in) + L-arginine(out) = L-homoarginine(out) + L-arginine(in). The enzyme catalyses N(omega)-methyl-L-arginine(in) + L-arginine(out) = N(omega)-methyl-L-arginine(out) + L-arginine(in). It carries out the reaction L-arginine(in) = L-arginine(out). It catalyses the reaction L-lysine(in) = L-lysine(out). The catalysed reaction is L-ornithine(in) = L-ornithine(out). The enzyme catalyses L-histidine(out) = L-histidine(in). In terms of biological role, mitochondrial transporter of arginine, lysine, homoarginine, methylarginine and, to a much lesser extent, ornithine and histidine. Does not transport carnitine nor acylcarnitines. Functions by both counter-exchange and uniport mechanisms. Plays a physiological role in the import of basic amino acids into mitochondria for mitochondrial protein synthesis and amino acid degradation. This chain is Mitochondrial basic amino acids transporter (SLC25A29), found in Bos taurus (Bovine).